Consider the following 190-residue polypeptide: Molybdenum cofactor guanylyltransferase (190 aa).

GTP-binding positions include Leu-10 to Gly-12, Lys-23, Asn-51, Asp-69, and Asp-99. A Mg(2+)-binding site is contributed by Asp-99.

Belongs to the MobA family. As to quaternary structure, monomer. It depends on Mg(2+) as a cofactor.

It is found in the cytoplasm. It catalyses the reaction Mo-molybdopterin + GTP + H(+) = Mo-molybdopterin guanine dinucleotide + diphosphate. Transfers a GMP moiety from GTP to Mo-molybdopterin (Mo-MPT) cofactor (Moco or molybdenum cofactor) to form Mo-molybdopterin guanine dinucleotide (Mo-MGD) cofactor. This is Molybdenum cofactor guanylyltransferase from Mannheimia succiniciproducens (strain KCTC 0769BP / MBEL55E).